The following is a 424-amino-acid chain: UPF0597 protein Shewana3_2972 (424 aa).

It belongs to the UPF0597 family.

This chain is UPF0597 protein Shewana3_2972, found in Shewanella sp. (strain ANA-3).